The chain runs to 200 residues: Dephospho-CoA kinase (200 aa).

The region spanning 3–200 (RIGLTGGIGS…LIAEILSRVN (198 aa)) is the DPCK domain. An ATP-binding site is contributed by 11–16 (GSGKST).

It belongs to the CoaE family.

The protein resides in the cytoplasm. It catalyses the reaction 3'-dephospho-CoA + ATP = ADP + CoA + H(+). The protein operates within cofactor biosynthesis; coenzyme A biosynthesis; CoA from (R)-pantothenate: step 5/5. In terms of biological role, catalyzes the phosphorylation of the 3'-hydroxyl group of dephosphocoenzyme A to form coenzyme A. This chain is Dephospho-CoA kinase, found in Corynebacterium glutamicum (strain ATCC 13032 / DSM 20300 / JCM 1318 / BCRC 11384 / CCUG 27702 / LMG 3730 / NBRC 12168 / NCIMB 10025 / NRRL B-2784 / 534).